The primary structure comprises 576 residues: MAGUK p55 subfamily member 7 (576 aa).

2 L27 domains span residues S10–E63 and P65–V122. In terms of domain architecture, PDZ spans I139–I220. The SH3 domain maps to D228–F298. Residues Y368–E560 form the Guanylate kinase-like domain.

It belongs to the MAGUK family.

It localises to the membrane. Its subcellular location is the cell junction. It is found in the tight junction. The protein resides in the adherens junction. Acts as an important adapter that promotes epithelial cell polarity and tight junction formation. Involved in the assembly of protein complexes at sites of cell-cell contact. This chain is MAGUK p55 subfamily member 7 (mpp7), found in Xenopus tropicalis (Western clawed frog).